We begin with the raw amino-acid sequence, 297 residues long: Myoblast determination protein 1 homolog (297 aa).

A disordered region spans residues 52 to 76; it reads KPEEHPHHHGHHHGHPHEEEHVRAP. The bHLH domain occupies 101–152; it reads DRRKAATMRERRRLSKVNEAFETLKRCTSTNPNQRLPKVEILRNAIRYIESL. 2 disordered regions span residues 171-221 and 243-297; these read SGES…GKSS and CPIL…YQVL. 2 stretches are compositionally biased toward polar residues: residues 174-184 and 258-297; these read SDASSPRSNCS and CSPQEGASLNDSGAQIPSPTNCTPLPQDSSSSSNPIYQVL.

In terms of assembly, efficient DNA binding requires dimerization with another bHLH protein. Seems to form active heterodimers with ITF-2.

The protein localises to the nucleus. Acts as a transcriptional activator that promotes transcription of muscle-specific target genes and plays a role in muscle differentiation. Induces fibroblasts to differentiate into myoblasts. Interacts with and is inhibited by the twist protein. This interaction probably involves the basic domains of both proteins. In Coturnix japonica (Japanese quail), this protein is Myoblast determination protein 1 homolog (MYOD1).